A 263-amino-acid chain; its full sequence is Splicing regulator sde2 (263 aa).

The propeptide at 1-84 (MECKTVFLNG…LTLCTRVLGG (84 aa)) is UBL. 3 disordered regions span residues 95 to 118 (AGGR…LDGN), 137 to 158 (PAET…LAAD), and 194 to 263 (STSA…LYGL). The segment covering 102–117 (KRNEQENQDSCRDLDG) has biased composition (basic and acidic residues). 2 stretches are compositionally biased toward low complexity: residues 194–209 (STSA…GATT) and 219–230 (NNNSSINSWSRR).

The protein belongs to the SDE2 family. In terms of assembly, interacts with cay1/cactin. Interacts with prp19. Interacts with cwf12. Interacts with cdc5. The N-terminal UBL (ubiquitin-like) propeptide is cleaved at Gly-84 by the deubiquitinating enzymes ubp5 and ubp15; the resulting mature sde2 associates with spliceosomes. Post-translationally, polyubiquitinated; ubiquitination is partially dependent on ubr11.

It is found in the cytoplasm. The protein localises to the nucleus. Plays a role in pre-mRNA splicing by facilitating excision of introns featuring relatively long (&gt;21 nucleotides) spacing between the branchpoint and 3'-splice site (ss). Recruits cactin to the spliceosome which may enable folding of RNA between the branchpoint and 3'-ss, to guide the splice site towards the spliceosome's catalytic center. Required for proper chromatin organization by assisting splicing of components involved in genomic stability and telomere organization. The sequence is that of Splicing regulator sde2 from Schizosaccharomyces pombe (strain 972 / ATCC 24843) (Fission yeast).